A 269-amino-acid chain; its full sequence is 4-hydroxy-tetrahydrodipicolinate reductase (269 aa).

Residues 10–15 (GANGRM), glutamate 36, 99–101 (GTT), and 123–126 (AANF) each bind NAD(+). Histidine 156 functions as the Proton donor/acceptor in the catalytic mechanism. Histidine 157 is a binding site for (S)-2,3,4,5-tetrahydrodipicolinate. Lysine 160 functions as the Proton donor in the catalytic mechanism. Residue 166–167 (GT) participates in (S)-2,3,4,5-tetrahydrodipicolinate binding.

The protein belongs to the DapB family.

Its subcellular location is the cytoplasm. It catalyses the reaction (S)-2,3,4,5-tetrahydrodipicolinate + NAD(+) + H2O = (2S,4S)-4-hydroxy-2,3,4,5-tetrahydrodipicolinate + NADH + H(+). It carries out the reaction (S)-2,3,4,5-tetrahydrodipicolinate + NADP(+) + H2O = (2S,4S)-4-hydroxy-2,3,4,5-tetrahydrodipicolinate + NADPH + H(+). Its pathway is amino-acid biosynthesis; L-lysine biosynthesis via DAP pathway; (S)-tetrahydrodipicolinate from L-aspartate: step 4/4. Functionally, catalyzes the conversion of 4-hydroxy-tetrahydrodipicolinate (HTPA) to tetrahydrodipicolinate. The chain is 4-hydroxy-tetrahydrodipicolinate reductase from Neisseria meningitidis serogroup B (strain ATCC BAA-335 / MC58).